Here is a 52-residue protein sequence, read N- to C-terminus: Small, acid-soluble spore protein K (52 aa).

The interval 1–52 (MGKQAEFWSESKNNSKIDGQPKAKSRFASKRPNGTINTHPQERMRAANQQEE) is disordered.

This sequence belongs to the SspK family.

It is found in the spore core. This chain is Small, acid-soluble spore protein K, found in Bacillus anthracis (strain A0248).